The sequence spans 427 residues: ATP-dependent RNA helicase DDX39A (427 aa).

Residues 1–19 (MAEQDVENELLDYDEDEEP) are compositionally biased toward acidic residues. The disordered stretch occupies residues 1–35 (MAEQDVENELLDYDEDEEPQVPQESTPAPPKKDVK). A2 is subject to N-acetylalanine. K31 participates in a covalent cross-link: Glycyl lysine isopeptide (Lys-Gly) (interchain with G-Cter in SUMO2). Position 35 is an N6-acetyllysine; alternate (K35). A Glycyl lysine isopeptide (Lys-Gly) (interchain with G-Cter in SUMO2); alternate cross-link involves residue K35. Phosphoserine is present on S37. The short motif at 44-72 (SGFRDFLLKPELLRAIVDCGFEHPSEVQH) is the Q motif element. In terms of domain architecture, Helicase ATP-binding spans 75–248 (IPQAILGMDV…RKFMQDPMEV (174 aa)). 88–95 (AKSGMGKT) lines the ATP pocket. Residues K154 and K162 each participate in a glycyl lysine isopeptide (Lys-Gly) (interchain with G-Cter in SUMO2) cross-link. Position 171 is a phosphothreonine (T171). The short motif at 195–198 (DECD) is the DECD box element. Glycyl lysine isopeptide (Lys-Gly) (interchain with G-Cter in SUMO2) cross-links involve residues K240 and K255. The Helicase C-terminal domain occupies 260-421 (GLQQYYVKLK…ELPEEIDIST (162 aa)). S426 carries the post-translational modification Phosphoserine.

Belongs to the DEAD box helicase family. DECD subfamily. Binds ALYREF/THOC4 and DDX39B/BAT1. Interacts with the apo-AREX complex component SARNP. Interacts with MX1. Interacts with MCM3AP isoform GANP. Interacts with ECD. Interacts with PHAX; this interaction stimulates PHAX RNA binding activity. SUMOylated by RANBP2; SUMOylation modification affects its ability to bind RNA.

It localises to the nucleus. Its subcellular location is the cytoplasm. The enzyme catalyses ATP + H2O = ADP + phosphate + H(+). Its function is as follows. Helicase that plays an essential role in mRNA export and is involved in multiple steps in RNA metabolism including alternative splicing. Regulates nuclear mRNA export to the cytoplasm through association with ECD. Also involved in spliceosomal uridine-rich small nuclear RNA (U snRNA) export by stimulating the RNA binding of adapter PHAX. Plays a role in the negative regulation of type I IFN production by increasing the nuclear retention of antiviral transcripts and thus reducing their protein expression. Independently of the interferon pathway, plays an antiviral role against alphaviruses by binding to a 5' conserved sequence element in the viral genomic RNA. This is ATP-dependent RNA helicase DDX39A (Ddx39a) from Rattus norvegicus (Rat).